The primary structure comprises 446 residues: Tubulin beta-3 chain (446 aa).

GTP-binding residues include Gln-11, Glu-69, Ser-138, Gly-142, Thr-143, Gly-144, Asn-204, and Asn-226. Glu-69 lines the Mg(2+) pocket. Residues 421–446 (EYQQYQDATAEEEDYEEEEEDEEVAA) are disordered. A compositionally biased stretch (acidic residues) spans 429 to 446 (TAEEEDYEEEEEDEEVAA).

The protein belongs to the tubulin family. Dimer of alpha and beta chains. A typical microtubule is a hollow water-filled tube with an outer diameter of 25 nm and an inner diameter of 15 nM. Alpha-beta heterodimers associate head-to-tail to form protofilaments running lengthwise along the microtubule wall with the beta-tubulin subunit facing the microtubule plus end conferring a structural polarity. Microtubules usually have 13 protofilaments but different protofilament numbers can be found in some organisms and specialized cells. The cofactor is Mg(2+). In terms of tissue distribution, expressed in roots, second node, leaf sheaths, and suspension cultured cells.

The protein resides in the cytoplasm. It localises to the cytoskeleton. Functionally, tubulin is the major constituent of microtubules, a cylinder consisting of laterally associated linear protofilaments composed of alpha- and beta-tubulin heterodimers. Microtubules grow by the addition of GTP-tubulin dimers to the microtubule end, where a stabilizing cap forms. Below the cap, tubulin dimers are in GDP-bound state, owing to GTPase activity of alpha-tubulin. This Oryza sativa subsp. japonica (Rice) protein is Tubulin beta-3 chain (TUBB3).